Reading from the N-terminus, the 356-residue chain is MAKRVAGSKRYVHPLPIEPVVLPPLIAHNPLSWVYWVLAYVTSSNQLPRKIPLEVGADGRYTVTGREQMQYLWEHGFFGTGQLSRSEPTWQARTVDRLQLDTEGIAGHKLEQVTQLRRKQRLEFKRERASFERKRLELRRQGVLESEILEQERLWLKQLRDRELQWEASTGDPSPVRAEDAEIIAEDGASVLPIEKLELMPVEALFLTLALPVLHADAPAILARTLGPQPALPQIERLCRLYAAYHHYRSHGWCVRSGIKFGCDFLLYRRGPPFHHAEFSVMVLAPDERHDYTWYSTVARVVGGAQKTLVLAYVARRAAADQLAALWHARRYMEAFALFEVHELVYRRWLPGKNRE.

Residues Tyr268, His276, and Lys307 contribute to the active site.

The protein belongs to the tRNA-intron endonuclease family. In terms of assembly, heterotetramer composed of SEN2, SEN15, SEN34 and SEN54. Interacts directly with SEN54.

The catalysed reaction is pretRNA = a 3'-half-tRNA molecule with a 5'-OH end + a 5'-half-tRNA molecule with a 2',3'-cyclic phosphate end + an intron with a 2',3'-cyclic phosphate and a 5'-hydroxyl terminus.. In terms of biological role, constitutes one of the two catalytic subunit of the tRNA-splicing endonuclease complex, a complex responsible for identification and cleavage of the splice sites in pre-tRNA. It cleaves pre-tRNA at the 5'- and 3'-splice sites to release the intron. The products are an intron and two tRNA half-molecules bearing 2',3'-cyclic phosphate and 5'-OH termini. There are no conserved sequences at the splice sites, but the intron is invariably located at the same site in the gene, placing the splice sites an invariant distance from the constant structural features of the tRNA body. This subunit may anchor the endonuclease complex to the nuclear membrane. Probably carries the active site for 5'-splice site cleavage. The sequence is that of tRNA-splicing endonuclease subunit SEN2 (SEN2) from Eremothecium gossypii (strain ATCC 10895 / CBS 109.51 / FGSC 9923 / NRRL Y-1056) (Yeast).